Consider the following 347-residue polypeptide: Epimerase family protein SDR39U1 homolog, chloroplastic (347 aa).

The transit peptide at Met1–Leu37 directs the protein to the chloroplast. NADP(+)-binding positions include Thr54–Ile57, Thr76–Arg77, Leu115–Pro119, and Arg136.

Can form homodimers. In terms of tissue distribution, expressed in leaves, stems and flower buds.

It is found in the plastid. The protein resides in the chloroplast inner membrane. Its subcellular location is the chloroplast. Its function is as follows. Putative NADP-dependent oxidoreductase that acts as a positive regulator of chloroplast division. May play a role at an early stage of the division process. This is Epimerase family protein SDR39U1 homolog, chloroplastic from Arabidopsis thaliana (Mouse-ear cress).